We begin with the raw amino-acid sequence, 132 residues long: MGNDIIANMITAIRNANLGRAETVEVPATNLTRNIAKILLREGFIESFSEHQENKNSFLIFILKYRGKKRKPYITTLRRISKPGLRIYSNYQEIPRVLGGTGIVILSTSRGIITDREARQKQVGGEILCYVW.

Belongs to the universal ribosomal protein uS8 family. As to quaternary structure, part of the 30S ribosomal subunit.

It is found in the plastid. Its subcellular location is the chloroplast. Its function is as follows. One of the primary rRNA binding proteins, it binds directly to 16S rRNA central domain where it helps coordinate assembly of the platform of the 30S subunit. This Anthoceros angustus (Hornwort) protein is Small ribosomal subunit protein uS8c (rps8).